Here is an 854-residue protein sequence, read N- to C-terminus: Armadillo repeat-containing protein 2 (854 aa).

Disordered regions lie at residues 1–116 (MLSS…SFPK), 140–194 (QGML…PLLT), and 206–255 (EVSL…ETDT). Low complexity predominate over residues 58 to 73 (PASSRSPENRPPSSFS). Polar residues-rich tracts occupy residues 74 to 87 (LHASSFELSDSKPI) and 162 to 187 (KPVSVGSSTARRNGTHLTASSATGQL). ARM repeat units follow at residues 255-294 (TEVDEVFWKARIVPILHELENEEDIEEMCAACTQLHRTLE), 298-337 (MLGKKFKRRTVLLKALYKLVDADSDPLSLKLAKLILALKV), 356-396 (EKND…ALKF), 401-442 (PGFL…HLLV), 455-496 (PLTR…KLTS), 499-540 (DCCA…NLTA), 544-583 (QARELFSRETGSVETLLTLFQSFYHHKENSPKLQLSEAKP), 585-605 (AEAEDVLVKLTRVLANIAIHP), 606-649 (RIGP…NLSF), 651-692 (QVKS…NLSQ), 694-733 (HDVCNFLMQKNVHKFMITLLEAKHQDICFSACGVLLNLTV), and 735-777 (KEKR…NFSE).

In terms of biological role, required for sperm flagellum axoneme organization and function. Involved in axonemal central pair complex assembly and/or stability. This is Armadillo repeat-containing protein 2 from Mus musculus (Mouse).